Reading from the N-terminus, the 861-residue chain is Leucine--tRNA ligase (861 aa).

The short motif at 42 to 52 (PYPSGRLHMGH) is the 'HIGH' region element. Positions 619 to 623 (KMSKS) match the 'KMSKS' region motif. Lysine 622 lines the ATP pocket.

The protein belongs to the class-I aminoacyl-tRNA synthetase family.

Its subcellular location is the cytoplasm. The enzyme catalyses tRNA(Leu) + L-leucine + ATP = L-leucyl-tRNA(Leu) + AMP + diphosphate. In Haemophilus influenzae (strain PittEE), this protein is Leucine--tRNA ligase.